Reading from the N-terminus, the 246-residue chain is Eukaryotic translation initiation factor 6 (246 aa).

Phosphoserine; by CK1 occurs at positions 174 and 175.

The protein belongs to the eIF-6 family. In terms of assembly, monomer. Associates with the 60S ribosomal subunit. Post-translationally, phosphorylation at Ser-174 and Ser-175 promotes nuclear export.

It localises to the cytoplasm. The protein localises to the nucleus. Its subcellular location is the nucleolus. Binds to the 60S ribosomal subunit and prevents its association with the 40S ribosomal subunit to form the 80S initiation complex in the cytoplasm. Is also involved in ribosome biogenesis. Associates with pre-60S subunits in the nucleus and is involved in its nuclear export. This is Eukaryotic translation initiation factor 6 from Verticillium alfalfae (strain VaMs.102 / ATCC MYA-4576 / FGSC 10136) (Verticillium wilt of alfalfa).